The chain runs to 359 residues: MTSTLFFKPRPSSTLAEIAALTKAELIDPSQGDRVITGIASLDEAGPMHLGFFENLNYVAELEQTCAGACLVTQRHESRVPSHVAVLRVKSPVRAFVTYARHIHEDAMRPMSGFRSVGIAPSAVIHATARLEDGVIVDPLAVIGPEVEIGAGSVIGAGSVIASGVKIGRDCNVGANTTIQFALIGNNVLIHPGCHIGQDGFRFIFAQTHQKVPQVGRVIIQNDVEIGSGTTVDRGGLRDTVIGEGTKIDNQVQVGHNVTIGRHCVIAAQCGLAGSLTLGDNVALGAKVGVNNHVTIGDGAQITAMSAVKDSVPAGERWGGFFAKPTKQWFREIIAVERLLRSGAGAAPKSDDGKDGERG.

Residue His256 is the Proton acceptor of the active site.

It belongs to the transferase hexapeptide repeat family. LpxD subfamily. In terms of assembly, homotrimer.

It catalyses the reaction a UDP-3-O-[(3R)-3-hydroxyacyl]-alpha-D-glucosamine + a (3R)-hydroxyacyl-[ACP] = a UDP-2-N,3-O-bis[(3R)-3-hydroxyacyl]-alpha-D-glucosamine + holo-[ACP] + H(+). It participates in bacterial outer membrane biogenesis; LPS lipid A biosynthesis. Functionally, catalyzes the N-acylation of UDP-3-O-acylglucosamine using 3-hydroxyacyl-ACP as the acyl donor. Is involved in the biosynthesis of lipid A, a phosphorylated glycolipid that anchors the lipopolysaccharide to the outer membrane of the cell. The polypeptide is UDP-3-O-acylglucosamine N-acyltransferase (Rhodopseudomonas palustris (strain BisB5)).